The sequence spans 129 residues: Small ribosomal subunit protein uS11 (129 aa).

The protein belongs to the universal ribosomal protein uS11 family. In terms of assembly, part of the 30S ribosomal subunit. Interacts with proteins S7 and S18. Binds to IF-3.

Functionally, located on the platform of the 30S subunit, it bridges several disparate RNA helices of the 16S rRNA. Forms part of the Shine-Dalgarno cleft in the 70S ribosome. The protein is Small ribosomal subunit protein uS11 of Actinobacillus succinogenes (strain ATCC 55618 / DSM 22257 / CCUG 43843 / 130Z).